A 562-amino-acid polypeptide reads, in one-letter code: Methionine--tRNA ligase, mitochondrial (562 aa).

A mitochondrion-targeting transit peptide spans 1-10 (MLRSLALRTF). The 'HIGH' region motif lies at 43 to 53 (FYVNAAPHLGH). Residues 332 to 336 (KMSKS) carry the 'KMSKS' region motif. Lys335 provides a ligand contact to ATP.

Belongs to the class-I aminoacyl-tRNA synthetase family.

The protein localises to the mitochondrion matrix. The catalysed reaction is tRNA(Met) + L-methionine + ATP = L-methionyl-tRNA(Met) + AMP + diphosphate. This Xenopus laevis (African clawed frog) protein is Methionine--tRNA ligase, mitochondrial (mars2).